A 307-amino-acid polypeptide reads, in one-letter code: UDP-N-acetylenolpyruvoylglucosamine reductase (307 aa).

The region spanning T33 to G197 is the FAD-binding PCMH-type domain. The active site involves R176. S226 acts as the Proton donor in catalysis. E296 is a catalytic residue.

It belongs to the MurB family. It depends on FAD as a cofactor.

Its subcellular location is the cytoplasm. It catalyses the reaction UDP-N-acetyl-alpha-D-muramate + NADP(+) = UDP-N-acetyl-3-O-(1-carboxyvinyl)-alpha-D-glucosamine + NADPH + H(+). The protein operates within cell wall biogenesis; peptidoglycan biosynthesis. In terms of biological role, cell wall formation. This is UDP-N-acetylenolpyruvoylglucosamine reductase from Staphylococcus aureus (strain Mu3 / ATCC 700698).